Reading from the N-terminus, the 87-residue chain is COMM domain-containing protein 6 (87 aa).

N-acetylmethionine is present on methionine 1. Positions 20–87 constitute a COMM domain; the sequence is QLIDFQWKLG…KEIAAVIETV (68 aa).

This sequence belongs to the COMM domain-containing protein 6 family. As to quaternary structure, component of the commander complex consisting of the CCC subcomplex and the retriever subcomplex. Component of the CCC (COMMD/CCDC22/CCDC93) subcomplex consisting of COMMD1, COMMD2, COMMD3, COMMD4, COMMD5, COMMD6, COMMD7, COMMD8, COMMD9, COMMD10, CCDC22 and CCDC93; within the complex forms a heterodimer with COMMD1. May form a homodimer with isoform 1. Interacts with RELA, RELB, NFKB1/p105. Does not interact with NFKBIB. Interacts with CCDC22, CCDC93, SCNN1B, CUL4A.

The protein resides in the nucleus. The protein localises to the cytoplasm. Its function is as follows. Scaffold protein in the commander complex that is essential for endosomal recycling of transmembrane cargos; the commander complex is composed of the CCC subcomplex and the retriever subcomplex. May modulate activity of cullin-RING E3 ubiquitin ligase (CRL) complexes. Down-regulates activation of NF-kappa-B. Inhibits TNF-induced NFKB1 activation. The protein is COMM domain-containing protein 6 (Commd6) of Mus musculus (Mouse).